The primary structure comprises 71 residues: Conotoxin Lt11.3 (71 aa).

A signal peptide spans 1–26; the sequence is MMFRLTSVGCILLVIAFLNLVGLTNA. 4 cysteine pairs are disulfide-bonded: Cys27/Cys41, Cys34/Cys46, Cys40/Cys50, and Cys45/Cys54. Pro57 is modified (proline amide). A propeptide spanning residues 61 to 71 is cleaved from the precursor; sequence TRLQGFFKHRR.

This sequence belongs to the conotoxin I2 superfamily. In terms of tissue distribution, expressed by the venom duct.

Its subcellular location is the secreted. Functionally, probable neurotoxin. This Conus litteratus (Lettered cone) protein is Conotoxin Lt11.3.